A 545-amino-acid chain; its full sequence is Membrane protein insertase YidC (545 aa).

A run of 4 helical transmembrane segments spans residues 350–370, 424–444, 461–481, and 498–518; these read IIGN…AVLY, LPML…FASV, ADPY…QTYL, and PLVF…YWVV.

This sequence belongs to the OXA1/ALB3/YidC family. Type 1 subfamily. Interacts with the Sec translocase complex via SecD. Specifically interacts with transmembrane segments of nascent integral membrane proteins during membrane integration.

It localises to the cell inner membrane. In terms of biological role, required for the insertion and/or proper folding and/or complex formation of integral membrane proteins into the membrane. Involved in integration of membrane proteins that insert both dependently and independently of the Sec translocase complex, as well as at least some lipoproteins. Aids folding of multispanning membrane proteins. The polypeptide is Membrane protein insertase YidC (Neisseria meningitidis serogroup C (strain 053442)).